The chain runs to 296 residues: Nucleotide-binding protein SMU_1306c (296 aa).

13–20 contacts ATP; sequence GMSGAGKT. Residue 63-66 coordinates GTP; sequence DMRS.

It belongs to the RapZ-like family.

In terms of biological role, displays ATPase and GTPase activities. In Streptococcus mutans serotype c (strain ATCC 700610 / UA159), this protein is Nucleotide-binding protein SMU_1306c.